A 1035-amino-acid polypeptide reads, in one-letter code: Unconventional myosin IC (1035 aa).

One can recognise a Myosin motor domain in the interval 21–703 (GVQDFVLLEN…TLFDTEDAYQ (683 aa)). 114-121 (GESGSGKT) provides a ligand contact to ATP. S304 bears the Phosphoserine mark. Position 310 is a phosphothreonine (T310). An actin-binding region spans residues 578–600 (LNNLMDILMCKEPSYIRCIKPND). 3 IQ domains span residues 696–728 (FDTEDAYQEKKHEIAAIIQAHWKGLMQRRKYLK), 729–751 (LRAQVIIMQSYCRRKLAQQAAKK), and 752–779 (RREAADKIRAFIKGFITRNDAPNGFNEE). One can recognise a TH1 domain in the interval 857 to 1035 (KNNYASSVST…KGHLVIIGTQ (179 aa)).

The protein belongs to the TRAFAC class myosin-kinesin ATPase superfamily. Myosin family. As to quaternary structure, binds F-actin. In the embryo, expressed in gastric caeca, midgut cells of the proventriculus, and in the mid and hindgut. In the larval and adult gut brush border, expressed in the microvilli. Also expressed at high levels in follicle cells during oogenesis.

The protein resides in the cytoplasm. Its subcellular location is the cell cortex. The protein localises to the cell membrane. Functionally, unconventional myosin that functions as actin-based motor protein with ATPase activity. Binds to membranes enriched in phosphatidylinositol 4-5-bisphosphate, and can glide along actin filaments when anchored to a lipid bilayer. Functions as antagonist for Myo31DF, an unconventional myosin with an essential role in the establishment of body left-right asymmetry. In Drosophila melanogaster (Fruit fly), this protein is Unconventional myosin IC (Myo61F).